Here is a 52-residue protein sequence, read N- to C-terminus: Teratocyte protein CftICK-I (52 aa).

Residues 1–19 (MYKLCILFLVVIFAVMAIA) form the signal peptide. 3 disulfide bridges follow: Cys-22–Cys-37, Cys-29–Cys-41, and Cys-36–Cys-51.

As to expression, abundantly expressed by teratocytes, which are extra-embryonic cells released by parasitoid wasps into their hosts during larval eclosion.

The protein localises to the secreted. Its function is as follows. This endoparasitoid wasp peptide has immununosuppressive, antimicrobial and insecticidal activities. Suppress cellular immunity which is detectable as a reduction of hemocyte encapsulation in the host. Shows potent antifungal activity against C.albicans (MIC~0.25 ug/ml). In vivo, ingestion of this peptide (probably at excessive doses) increases larval mortality and reduces leaf consumption of D.saccharalis, a permissive host for C.flavipes. This is Teratocyte protein CftICK-I from Cotesia flavipes (Parasitic wasp).